The sequence spans 239 residues: U-scoloptoxin(11)-Sm3a (239 aa).

Residues 1–16 (MINFLLLVLILSVLES) form the signal peptide.

Belongs to the scoloptoxin-11 family. In terms of processing, contains 9 disulfide bonds. As to expression, expressed by the venom gland.

Its subcellular location is the secreted. The chain is U-scoloptoxin(11)-Sm3a from Scolopendra morsitans (Tanzanian blue ringleg centipede).